The sequence spans 115 residues: Large ribosomal subunit protein bL20 (115 aa).

It belongs to the bacterial ribosomal protein bL20 family.

Binds directly to 23S ribosomal RNA and is necessary for the in vitro assembly process of the 50S ribosomal subunit. It is not involved in the protein synthesizing functions of that subunit. This is Large ribosomal subunit protein bL20 from Chlorobium limicola (strain DSM 245 / NBRC 103803 / 6330).